The following is a 115-amino-acid chain: Probable K(+)/H(+) antiporter subunit C (115 aa).

The next 3 membrane-spanning stretches (helical) occupy residues 4 to 21, 28 to 47, and 75 to 97; these read ILSA…YLLL, VIIG…FGMG, and ALVL…VLLA.

The protein belongs to the CPA3 antiporters (TC 2.A.63) subunit C family. As to quaternary structure, may form a hetero-oligomeric complex that consists of six subunits: PhaAB, PhaC, PhaD, PhaE, PhaF and PhaG.

It localises to the cell membrane. Its function is as follows. Part of a K(+) efflux system which is required for the adaptation of R.meliloti to alkaline pH as well as for the infection process during symbiotic nodule development. The sequence is that of Probable K(+)/H(+) antiporter subunit C (phaC) from Rhizobium meliloti (strain 1021) (Ensifer meliloti).